The chain runs to 380 residues: Phthiodiolone/phenolphthiodiolone dimycocerosates ketoreductase (380 aa).

The protein belongs to the mer family. Phthiodiolone/phenolphthiodiolone dimycocerosates ketoreductase subfamily.

Functionally, catalyzes the reduction of the keto moiety of phthiodiolone dimycocerosates (DIM B) and glycosylated phenolphthiodiolone dimycocerosates to form the intermediate compounds phthiotriol and glycosylated phenolphthiotriol dimycocerosates during phthiocerol dimycocerosates (DIM A) and glycosylated phenolphthiocerol dimycocerosates (PGL) biosynthesis. The polypeptide is Phthiodiolone/phenolphthiodiolone dimycocerosates ketoreductase (Mycobacterium sp. (strain JLS)).